A 492-amino-acid polypeptide reads, in one-letter code: 3-octaprenyl-4-hydroxybenzoate carboxy-lyase (492 aa).

N175 contributes to the Mn(2+) binding site. Residues 178 to 180 (IYR), 192 to 194 (RWL), and 197 to 198 (RG) each bind prenylated FMN. Mn(2+) is bound at residue E241. The Proton donor role is filled by D290.

Belongs to the UbiD family. Homohexamer. The cofactor is prenylated FMN. It depends on Mn(2+) as a cofactor.

It is found in the cell membrane. It catalyses the reaction a 4-hydroxy-3-(all-trans-polyprenyl)benzoate + H(+) = a 2-(all-trans-polyprenyl)phenol + CO2. The protein operates within cofactor biosynthesis; ubiquinone biosynthesis. Its function is as follows. Catalyzes the decarboxylation of 3-octaprenyl-4-hydroxy benzoate to 2-octaprenylphenol, an intermediate step in ubiquinone biosynthesis. The polypeptide is 3-octaprenyl-4-hydroxybenzoate carboxy-lyase (Salmonella choleraesuis (strain SC-B67)).